The primary structure comprises 198 residues: Protein GrpE (198 aa).

Residues 1-14 (MSNEENKINEEALK) are compositionally biased toward basic and acidic residues. The segment at 1-20 (MSNEENKINEEALKQQDAAE) is disordered.

This sequence belongs to the GrpE family. Homodimer.

It localises to the cytoplasm. Participates actively in the response to hyperosmotic and heat shock by preventing the aggregation of stress-denatured proteins, in association with DnaK and GrpE. It is the nucleotide exchange factor for DnaK and may function as a thermosensor. Unfolded proteins bind initially to DnaJ; upon interaction with the DnaJ-bound protein, DnaK hydrolyzes its bound ATP, resulting in the formation of a stable complex. GrpE releases ADP from DnaK; ATP binding to DnaK triggers the release of the substrate protein, thus completing the reaction cycle. Several rounds of ATP-dependent interactions between DnaJ, DnaK and GrpE are required for fully efficient folding. This chain is Protein GrpE, found in Vibrio vulnificus (strain YJ016).